The sequence spans 406 residues: 3-phosphoshikimate 1-carboxyvinyltransferase (406 aa).

Positions 20, 21, and 25 each coordinate 3-phosphoshikimate. A phosphoenolpyruvate-binding site is contributed by Lys20. Residues Gly84 and Arg112 each coordinate phosphoenolpyruvate. Residues Ser155, Ser156, Gln157, Asp295, Gln317, and Lys321 each contribute to the 3-phosphoshikimate site. Position 157 (Gln157) interacts with phosphoenolpyruvate. Asp295 serves as the catalytic Proton acceptor. Phosphoenolpyruvate-binding residues include Arg325, Arg366, and Lys392.

The protein belongs to the EPSP synthase family. As to quaternary structure, monomer.

Its subcellular location is the cytoplasm. The enzyme catalyses 3-phosphoshikimate + phosphoenolpyruvate = 5-O-(1-carboxyvinyl)-3-phosphoshikimate + phosphate. Its pathway is metabolic intermediate biosynthesis; chorismate biosynthesis. Its function is as follows. Catalyzes the transfer of the enolpyruvyl moiety of phosphoenolpyruvate (PEP) to the 5-hydroxyl of shikimate-3-phosphate (S3P) to produce enolpyruvyl shikimate-3-phosphate and inorganic phosphate. The chain is 3-phosphoshikimate 1-carboxyvinyltransferase from Pyrococcus furiosus (strain ATCC 43587 / DSM 3638 / JCM 8422 / Vc1).